The chain runs to 2115 residues: Nuclear mitotic apparatus protein 1 (2115 aa).

Residues 1-212 (MTLHATRGAA…SPMGDILQTP (212 aa)) form a head (Globular) region. Ser-162 is subject to Phosphoserine. Phosphothreonine is present on Thr-163. A phosphoserine mark is found at Ser-169 and Ser-203. A Phosphothreonine modification is found at Thr-211. Residues 213–1699 (QFQMRRLKKQ…ADQQLRDLGK (1487 aa)) adopt a coiled-coil conformation. Ser-271 is modified (phosphoserine). Lys-379 carries the post-translational modification N6-acetyllysine. Ser-388 and Ser-395 each carry phosphoserine. Residues 549–560 (LRHQVEQLSSSL) show a composition bias toward low complexity. Disordered stretches follow at residues 549-593 (LRHQ…EERE) and 746-766 (LVEQ…GRKG). Basic and acidic residues predominate over residues 561–581 (KQKEQQLKEVAEKQEATRQDH). Residue Ser-820 is modified to Phosphoserine. Lys-891 carries the post-translational modification N6-acetyllysine. Composition is skewed to basic and acidic residues over residues 926–950 (AGEQ…RQPE) and 996–1013 (QEER…TQER). Disordered stretches follow at residues 926–958 (AGEQ…QQGR) and 988–1013 (LMES…TQER). Thr-1047 bears the Phosphothreonine; by PLK1 mark. Over residues 1090-1102 (LKEQLAKKEKEHA) the composition is skewed to basic and acidic residues. 2 disordered regions span residues 1090–1225 (LKEQ…RKNS) and 1275–1296 (ETAS…EVQS). 2 stretches are compositionally biased toward low complexity: residues 1103–1112 (SGSGAQSEAA) and 1133–1142 (EQQCQKQQEQ). The span at 1145-1163 (SLERSLEAERASRAERDSA) shows a compositional bias: basic and acidic residues. A Phosphoserine modification is found at Ser-1187. The segment covering 1198–1224 (KVQDHSKAEDEWKAQVARGRQEAERKN) has biased composition (basic and acidic residues). Position 1225 is a phosphoserine (Ser-1225). A compositionally biased stretch (basic and acidic residues) spans 1283-1296 (AAERSSALREEVQS). N6-acetyllysine is present on Lys-1511. The residue at position 1601 (Ser-1601) is a Phosphoserine. Residue Lys-1699 forms a Glycyl lysine isopeptide (Lys-Gly) (interchain with G-Cter in SUMO2) linkage. Residues 1699–1876 (KFQVATDALK…NSALLSLPGY (178 aa)) form a membrane-binding domain 1 region. The tail (Globular) stretch occupies residues 1700-2115 (FQVATDALKS…TPRAKGKAKH (416 aa)). Phosphoserine occurs at positions 1721, 1724, and 1728. Residues 1734–1761 (PLSITSKLPRTQPDGTSVPGEPASPISQ) are disordered. Positions 1735-1748 (LSITSKLPRTQPDG) are enriched in polar residues. The Tankyrase-binding domain signature appears at 1742–1748 (PRTQPDG). Phosphoserine is present on residues Ser-1757 and Ser-1760. A Glycyl lysine isopeptide (Lys-Gly) (interchain with G-Cter in SUMO1); alternate cross-link involves residue Lys-1766. Lys-1766 is covalently cross-linked (Glycyl lysine isopeptide (Lys-Gly) (interchain with G-Cter in SUMO2); alternate). 2 positions are modified to phosphoserine; by PLK1: Ser-1769 and Ser-1772. Tyr-1774 carries the phosphotyrosine modification. Residue Thr-1776 is modified to Phosphothreonine. Position 1788 is a phosphoserine (Ser-1788). Positions 1788–1810 (SSLDSLGDVFLDSGRKTRSARRR) are 4.1-binding domain. Position 1789 is a phosphoserine; by PLK1 (Ser-1789). Residues Ser-1792 and Ser-1800 each carry the phosphoserine modification. Phosphothreonine is present on Thr-1804. A Glycyl lysine isopeptide (Lys-Gly) (interchain with G-Cter in SUMO2) cross-link involves residue Lys-1822. Disordered regions lie at residues 1826–1901 (EEPD…GRNS) and 1955–2115 (EMKT…KAKH). Phosphoserine is present on residues Ser-1830 and Ser-1833. A compositionally biased stretch (polar residues) spans 1830–1857 (SANSSFYSTRSAPASQASLRATSSTQSL). Residue Ser-1834 is modified to Phosphoserine; by PLK1. Tyr-1836 bears the Phosphotyrosine mark. Ser-1840 is subject to Phosphoserine. Ser-1844 bears the Phosphoserine; alternate mark. A glycan (O-linked (GlcNAc) serine; alternate) is linked at Ser-1844. A phosphoserine mark is found at Ser-1862 and Ser-1887. Over residues 1879–1891 (TTRSSARRSQAGV) the composition is skewed to polar residues. A tubulin-binding domain region spans residues 1882 to 1985 (SSARRSQAGV…AEGTGITTRQ (104 aa)). A GPSM2-binding domain region spans residues 1892-1926 (SSGAPPGRNSFYMGTCQDEPEQLDDWNRIAELQQR). Residues 1955–1966 (EMKTGDPQETLR) show a composition bias toward basic and acidic residues. Ser-1969 carries the post-translational modification Phosphoserine. A membrane-binding domain 2 region spans residues 1981–2060 (ITTRQQRKRV…SILNTPKKLG (80 aa)). A Nuclear localization signal motif is present at residues 1984–1989 (RQQRKR). Ser-1991 carries the phosphoserine modification. Thr-2000 is subject to Phosphothreonine. Ser-2003 is subject to Phosphoserine. Residue Thr-2015 is modified to Phosphothreonine; by CDK1. Residues 2015-2032 (TPRDRHEGRKQSTTEAQK) are compositionally biased toward basic and acidic residues. Ser-2047 carries the phosphoserine modification. Thr-2055 is subject to Phosphothreonine; by CDK1. Phosphoserine is present on residues Ser-2062 and Ser-2077. Residue Ser-2087 is modified to Phosphoserine; by CDK1. A compositionally biased stretch (low complexity) spans 2089–2108 (RIATTTASAATAAAIGATPR). Position 2106 is a phosphothreonine; by CDK1 (Thr-2106).

Homodimer. Also forms multiarm oligomers by association of C-terminal tail domains, oligomers may further assemble to form a hexagonal nuclear lattice-like network. Associates with the dynein-dynactin complex; this association promotes the transport and accumulation of NUMA1 at the mitotic spindle poles that is inhibited by the BRISC complex in a PLK1-dependent manner. Part of a spindle orientation complex at least composed of GNAI1, GPSM2 and NUMA1. Interacts (via C-terminus) with microtubules (MTs); this interaction is direct and promotes both MT bundle formation and stability in a dynein-dynactin complex- and CDK1-independent manner. Interacts with EPB41 and EPB41L2; these interactions are negatively regulated by CDK1 during metaphase and are important for anaphase-specific localization of NUMA1 in symmetrically dividing cells. Interacts (via C-terminus) with GPSM2 (via TPR repeats); this interaction is direct, prevented by competitive binding of INSC, is inhibited in a PLK1-dependent manner, blocks the association of NUMA1 with MTs and inhibits NUMA1-induced MT bundle formation, prevents the association of NUMA1 with SPAG5, induces mitotic spindle pole localization of GPSM2, both metaphase cell cortex localization of NUMA1 and mitotic spindle organization. Does not interact with GPSM2 during anaphase. Interacts (via C-terminus) with the nuclear importin alpha/importin beta receptor; this interaction is inhibited by RanGTP. Interacts (via C-terminus) with KPNB1; this interaction is inhibited by RanGTP and the BRISC complex. Interacts with ABRAXAS2 and the BRISC complex; these interactions regulate mitotic spindle assembly. Interacts (via N-terminal end of the coiled-coil domain) with RAE1; this interaction promotes mitotic spindle formation. Interacts (via C-terminus) with SPAG5 (via C-terminus); this interaction promotes the recruitment of SPAG5 to the MTs at spindle poles in a dynein-dynactin-dependent manner and regulates mitotic spindle organization and proper chromosome alignment during mitosis. Interacts with TNKS; this interaction occurs at the onset of mitosis. Interacts with TNKS2. Interacts with tubulin. Interacts with KHDC3L (via C-terminus). Post-translationally, phosphorylation and dephosphorylation on Thr-2055 regulates the extent of cortical NUMA1 and the dynein-dynactin complex localization during mitotic metaphase and anaphase. In metaphase, phosphorylation on Thr-2055 occurs in a kinase CDK1-dependent manner; this phosphorylation maintains low levels of cortical dynein-dynactin complex at metaphase, and hence proper spindle positioning. In anaphase, dephosphorylated on Thr-2055 by phosphatase PPP2CA; this dephosphorylation stimulates its membrane association and with the dynein-dynactin complex its enrichment at the cell cortex, and hence robust spindle elongation. Probably also phosphorylated on Thr-2015 and Ser-2087 by CDK1; these phosphorylations may regulate its cell cortex recruitment during metaphase and anaphase. Phosphorylated on Thr-1047, Ser-1769, Ser-1772, Ser-1789 and Ser-1834 by PLK1; these phosphorylations induce cortical dynein-dynactin complex dissociation from the NUMA1-GPSM2 complex and negatively regulates cortical dynein-dynactin complex localization. In terms of processing, ADP-ribosylated by TNKS at the onset of mitosis; ADP-ribosylation is not required for its localization to spindle poles. O-glycosylated during cytokinesis at sites identical or close to phosphorylation sites, this interferes with the phosphorylation status. Post-translationally, ubiquitinated with 'Lys-63'-linked polyubiquitin chains. Deubiquitination by the BRISC complex is important for the incorporation of NUMA1 into mitotic spindle poles and normal spindle pole function, probably by modulating interactions between NUMA1, dynein-dynactin complex and importin-beta.

The protein resides in the nucleus. The protein localises to the nucleoplasm. It is found in the nucleus matrix. It localises to the chromosome. Its subcellular location is the cytoplasm. The protein resides in the cytoskeleton. The protein localises to the microtubule organizing center. It is found in the centrosome. It localises to the spindle pole. Its subcellular location is the cell cortex. The protein resides in the cell membrane. The protein localises to the lateral cell membrane. It is found in the cytosol. Its function is as follows. Microtubule (MT)-binding protein that plays a role in the formation and maintenance of the spindle poles and the alignement and the segregation of chromosomes during mitotic cell division. Functions to tether the minus ends of MTs at the spindle poles, which is critical for the establishment and maintenance of the spindle poles. Plays a role in the establishment of the mitotic spindle orientation during metaphase and elongation during anaphase in a dynein-dynactin-dependent manner. In metaphase, part of a ternary complex composed of GPSM2 and G(i) alpha proteins, that regulates the recruitment and anchorage of the dynein-dynactin complex in the mitotic cell cortex regions situated above the two spindle poles, and hence regulates the correct oritentation of the mitotic spindle. During anaphase, mediates the recruitment and accumulation of the dynein-dynactin complex at the cell membrane of the polar cortical region through direct association with phosphatidylinositol 4,5-bisphosphate (PI(4,5)P2), and hence participates in the regulation of the spindle elongation and chromosome segregation. Also binds to other polyanionic phosphoinositides, such as phosphatidylinositol 3-phosphate (PIP), lysophosphatidic acid (LPA) and phosphatidylinositol triphosphate (PIP3), in vitro. Also required for proper orientation of the mitotic spindle during asymmetric cell divisions. Plays a role in mitotic MT aster assembly. Involved in anastral spindle assembly. Positively regulates TNKS protein localization to spindle poles in mitosis. Highly abundant component of the nuclear matrix where it may serve a non-mitotic structural role, occupies the majority of the nuclear volume. Required for epidermal differentiation and hair follicle morphogenesis. The sequence is that of Nuclear mitotic apparatus protein 1 from Homo sapiens (Human).